The following is a 167-amino-acid chain: Phospholipase A2 inhibitor alpha-like protein (167 aa).

An N-terminal signal peptide occupies residues 1 to 19 (MQLILLSSLLLLGLSLANG). Residues 62 to 163 (GSERLYVTNK…CDEDLLVVCE (102 aa)) enclose the C-type lectin domain. Intrachain disulfides connect C83-C162 and C140-C154.

The protein belongs to the alpha-type phospholipase A2 inhibitor family. Homotrimer.

Its subcellular location is the secreted. Has no PLA2 inhibitory activity. The polypeptide is Phospholipase A2 inhibitor alpha-like protein (Elaphe climacophora (Japanese rat snake)).